The chain runs to 182 residues: Glutathione-regulated potassium-efflux system ancillary protein KefG (182 aa).

Belongs to the NAD(P)H dehydrogenase (quinone) family. KefG subfamily. As to quaternary structure, interacts with KefB.

The protein localises to the cell inner membrane. The enzyme catalyses a quinone + NADH + H(+) = a quinol + NAD(+). It catalyses the reaction a quinone + NADPH + H(+) = a quinol + NADP(+). Functionally, regulatory subunit of a potassium efflux system that confers protection against electrophiles. Required for full activity of KefB. The polypeptide is Glutathione-regulated potassium-efflux system ancillary protein KefG (Yersinia pseudotuberculosis serotype O:1b (strain IP 31758)).